A 335-amino-acid polypeptide reads, in one-letter code: Holliday junction branch migration complex subunit RuvB (335 aa).

The tract at residues 1 to 181 is large ATPase domain (RuvB-L); the sequence is MDRIVEIEKY…FGMQFRLEFY (181 aa). Residues leucine 20, arginine 21, glycine 62, lysine 65, threonine 66, threonine 67, 128–130, arginine 171, tyrosine 181, and arginine 218 each bind ATP; that span reads EDY. Threonine 66 contributes to the Mg(2+) binding site. A small ATPAse domain (RuvB-S) region spans residues 182–252; it reads KDSELALILQ…RANEALNSLG (71 aa). The tract at residues 255-335 is head domain (RuvB-H); sequence ELGFDAMDLR…LNYEKTLFEE (81 aa). 2 residues coordinate DNA: arginine 309 and arginine 314.

Belongs to the RuvB family. In terms of assembly, homohexamer. Forms an RuvA(8)-RuvB(12)-Holliday junction (HJ) complex. HJ DNA is sandwiched between 2 RuvA tetramers; dsDNA enters through RuvA and exits via RuvB. An RuvB hexamer assembles on each DNA strand where it exits the tetramer. Each RuvB hexamer is contacted by two RuvA subunits (via domain III) on 2 adjacent RuvB subunits; this complex drives branch migration. In the full resolvosome a probable DNA-RuvA(4)-RuvB(12)-RuvC(2) complex forms which resolves the HJ.

It localises to the cytoplasm. The enzyme catalyses ATP + H2O = ADP + phosphate + H(+). Functionally, the RuvA-RuvB-RuvC complex processes Holliday junction (HJ) DNA during genetic recombination and DNA repair, while the RuvA-RuvB complex plays an important role in the rescue of blocked DNA replication forks via replication fork reversal (RFR). RuvA specifically binds to HJ cruciform DNA, conferring on it an open structure. The RuvB hexamer acts as an ATP-dependent pump, pulling dsDNA into and through the RuvAB complex. RuvB forms 2 homohexamers on either side of HJ DNA bound by 1 or 2 RuvA tetramers; 4 subunits per hexamer contact DNA at a time. Coordinated motions by a converter formed by DNA-disengaged RuvB subunits stimulates ATP hydrolysis and nucleotide exchange. Immobilization of the converter enables RuvB to convert the ATP-contained energy into a lever motion, pulling 2 nucleotides of DNA out of the RuvA tetramer per ATP hydrolyzed, thus driving DNA branch migration. The RuvB motors rotate together with the DNA substrate, which together with the progressing nucleotide cycle form the mechanistic basis for DNA recombination by continuous HJ branch migration. Branch migration allows RuvC to scan DNA until it finds its consensus sequence, where it cleaves and resolves cruciform DNA. In Campylobacter jejuni subsp. doylei (strain ATCC BAA-1458 / RM4099 / 269.97), this protein is Holliday junction branch migration complex subunit RuvB.